A 1016-amino-acid chain; its full sequence is Poly [ADP-ribose] polymerase 1 (1016 aa).

Position 2 is an N-acetylalanine (Ala2). The segment at 9–93 adopts a PARP-type 1 zinc-finger fold; it reads YRVEYAKSGR…TIKKMAETGG (85 aa). Residues Cys21 and Cys24 each coordinate Zn(2+). Ser41 bears the Phosphoserine mark. Residues His53 and Cys56 each contribute to the Zn(2+) site. N6-acetyllysine is present on residues Lys100 and Lys108. A PARP-type 2 zinc finger spans residues 116–206; it reads FGAGYAKSNR…TLKKQLPAIK (91 aa). Residues Cys128 and Cys131 each contribute to the Zn(2+) site. Lys134 carries the post-translational modification N6-acetyllysine. Zn(2+) is bound by residues His162 and Cys165. Ser180 and Ser188 each carry phosphoserine. Lys206 is covalently cross-linked (Glycyl lysine isopeptide (Lys-Gly) (interchain with G-Cter in SUMO1); alternate). Lys206 is covalently cross-linked (Glycyl lysine isopeptide (Lys-Gly) (interchain with G-Cter in SUMO2); alternate). 2 consecutive short sequence motifs (nuclear localization signal) follow at residues 210–212 and 224–229; these read KRK and KKKSKK. Residues 228–362 form the PADR1 zinc-binding domain; that stretch reads KKEKDKEIKL…IKKQDRIFPP (135 aa). A Glycyl lysine isopeptide (Lys-Gly) (interchain with G-Cter in SUMO2) cross-link involves residue Lys252. Phosphoserine occurs at positions 277 and 280. Residues 293 to 335 are zinc ribbon; the sequence is GALLPCEECSGQLVFKGDAYYCTGDVTAWTKCMVKTQTPNRKE. Positions 298, 301, 314, and 324 each coordinate Zn(2+). The segment at 360-390 is disordered; sequence FPPESSTPVGAAAPPSAASAPAAVHSGPPDK. The span at 365 to 386 shows a compositional bias: low complexity; the sequence is STPVGAAAPPSAASAPAAVHSG. Residues 376–526 are automodification domain; that stretch reads AASAPAAVHS…GTNKSEKRMK (151 aa). The 92-residue stretch at 387 to 478 folds into the BRCT domain; it reads PPDKPLSNMK…KSLQELLSTH (92 aa). Asp389 carries the polyADP-ribosyl aspartic acid modification. 7 positions are modified to polyADP-ribosyl glutamic acid: Glu409, Glu415, Glu437, Glu446, Glu447, Glu450, and Glu458. Lys469 is covalently cross-linked (Glycyl lysine isopeptide (Lys-Gly) (interchain with G-Cter in SUMO2)). 2 positions are modified to polyADP-ribosyl glutamic acid: Glu473 and Glu486. Residue Lys488 forms a Glycyl lysine isopeptide (Lys-Gly) (interchain with G-Cter in SUMO1); alternate linkage. Lys488 participates in a covalent cross-link: Glycyl lysine isopeptide (Lys-Gly) (interchain with G-Cter in SUMO2); alternate. A polyADP-ribosyl glutamic acid mark is found at Glu490 and Glu493. The interval 494 to 523 is disordered; it reads AVGPKGKSGAAPSKKSKGPVKEEGTNKSEK. Low complexity predominate over residues 496–506; it reads GPKGKSGAAPS. Ser501, Ser506, and Ser509 each carry ADP-ribosylserine. Over residues 512–523 the composition is skewed to basic and acidic residues; sequence PVKEEGTNKSEK. Lys514 participates in a covalent cross-link: Glycyl lysine isopeptide (Lys-Gly) (interchain with G-Cter in SUMO2). PolyADP-ribosyl glutamic acid occurs at positions 515 and 516. Ser521 carries the ADP-ribosylserine modification. Glu522 is modified (polyADP-ribosyl glutamic acid). Lys523 carries the N6-(ADP-ribosyl)lysine modification. Lys530 participates in a covalent cross-link: Glycyl lysine isopeptide (Lys-Gly) (interchain with G-Cter in SUMO2). The 97-residue stretch at 544–640 folds into the WGR domain; it reads NAHVLEKGGK…KNFTKHPKKF (97 aa). Residue Thr596 is modified to Phosphothreonine. Lys602 and Lys623 each carry N6-acetyllysine. A PARP alpha-helical domain is found at 664-781; the sequence is KSKLPKPVQN…DIEVAYSLLR (118 aa). A Glycyl lysine isopeptide (Lys-Gly) (interchain with G-Cter in SUMO1); alternate cross-link involves residue Lys750. Lys750 is covalently cross-linked (Glycyl lysine isopeptide (Lys-Gly) (interchain with G-Cter in SUMO2); alternate). Residues Ser784 and Ser788 each carry the phosphoserine modification. Positions 790–1016 constitute a PARP catalytic domain; it reads DPIDVNYEKL…LKFNFKTSLW (227 aa). NAD(+) is bound by residues 864 to 866, Gly873, Arg880, and Ser906; that span reads HGS. The active-site For poly [ADP-ribose] polymerase activity is the Glu990.

Belongs to the ARTD/PARP family. Homodimer; PARP-type zinc-fingers from separate PARP1 molecules form a dimer module that specifically recognizes DNA strand breaks. Heterodimer; heterodimerizes with PARP2. Interacts (via the PARP catalytic domain) with HPF1. Interacts with NMNAT1. Interacts with nucleosomes; with a preference for nucleosomes containing H2A.X. Interacts with APTX. Component of a base excision repair (BER) complex, containing at least XRCC1, PARP1, PARP2, POLB and LRIG3. Interacts with SRY. The SWAP complex consists of NPM1, NCL, PARP1 and SWAP70. Interacts with TIAM2. Interacts with PARP3; leading to activate PARP1 in absence of DNA. Interacts (when poly-ADP-ribosylated) with CHD1L (via macro domain). Interacts with the DNA polymerase alpha catalytic subunit POLA1; this interaction functions as part of the control of replication fork progression. Interacts with EEF1A1 and TXK. Interacts with RNF4. Interacts with RNF146. Interacts with ZNF423. Interacts with APLF. Interacts with SNAI1 (via zinc fingers); the interaction requires SNAI1 to be poly-ADP-ribosylated and non-phosphorylated (active) by GSK3B. Interacts (when poly-ADP-ribosylated) with PARP9. Interacts with NR4A3; activates PARP1 by improving acetylation of PARP1 and suppressing the interaction between PARP1 and SIRT1. Interacts (via catalytic domain) with PUM3; the interaction inhibits the poly-ADP-ribosylation activity of PARP1 and the degradation of PARP1 by CASP3 following genotoxic stress. Interacts with ZNF365. Interacts with RRP1B. Interacts with TIMELESS; the interaction is direct. Interacts with CGAS; leading to impede the formation of the PARP1-TIMELESS complex. Interacts with KHDC3L, the interaction is increased following the formation of DNA double-strand breaks. Interacts (when auto-poly-ADP-ribosylated) with XRCC1; leading to inhibit PARP1 ADP-ribosyltransferase activity. Interacts with SPINDOC; promoting PARP1 ADP-ribosyltransferase activity. Interacts with BANF1; leading to inhibit PARP1 ADP-ribosyltransferase activity in response to oxidative DNA damage. Interacts (when sumoylated and ubiquitinated) with VCP/p97; leading to its extraction from chromatin. Interacts with YARS1; promoting PARP1 ADP-ribosyltransferase activity. Interacts with PACMP micropeptide; Interacts with PACMP micropeptide; interaction. Interacts (when poly-ADP-ribosylated) with isoform 1 of MACROH2A1; MACROH2A1 specifically binds to poly-ADP-ribose chains and inhibits PARP1 activity, limiting the consumption of nuclear NAD(+). Interacts with CARM1; promoting recruitment to replication forks. Interacts with RECQL. Interacts with ZNF32; the interaction reshapes ZNF432 interacting proteins. Interacts with TPRN; TPRN interacts with a number of DNA damage response proteins, is recruited to sites of DNA damage and may play a role in DNA damage repair. In terms of assembly, interacts (when auto-poly-ADP-ribosylated) with AIFM1. Poly-ADP-ribosylated on serine, glutamate and aspartate residues by autocatalysis. Auto-ADP-ribosylation on serine takes place following interaction with HPF1. Auto poly-ADP-ribosylation on serine residues promotes its dissociation from chromatin. Poly-ADP-ribosylated by PARP2; poly-ADP-ribosylation mediates the recruitment of CHD1L to DNA damage sites. Mono-ADP-ribosylated at Lys-523 by SIRT6 in response to oxidative stress, promoting recruitment to double-strand breaks (DSBs) sites. Post-translationally, S-nitrosylated, leading to inhibit transcription regulation activity. In terms of processing, phosphorylated at Thr-596 by PRKDC in response to DNA damage following virus infection, promoting its translocation to the cytosol. Phosphorylated by TXK. Proteolytically cleaved by caspase-3 (CASP3) and caspase-7 (CASP7) in response to apoptosis to generate the Poly [ADP-ribose] polymerase 1, processed N-terminus and Poly [ADP-ribose] polymerase 1, processed C-terminus forms. Post-translationally, sumoylated with SUMO1 or SUMO2 by PIAS4 following prolonged residence (trapping) to chromatin. Sumoylation promotes ubiquitination by RNF4 and removal from chromatin by VCP/p97. In terms of processing, ubiquitinated by RNF4 following sumoylation by PIAS4 in response to prolonged residence (trapping) to chromatin. Ubiquitination promotes removal from chromatin by VCP/p97.

The protein resides in the chromosome. It is found in the nucleus. The protein localises to the nucleolus. Its subcellular location is the cytoplasm. It localises to the cytosol. The catalysed reaction is NAD(+) + (ADP-D-ribosyl)n-acceptor = nicotinamide + (ADP-D-ribosyl)n+1-acceptor + H(+).. It carries out the reaction L-seryl-[protein] + NAD(+) = O-(ADP-D-ribosyl)-L-seryl-[protein] + nicotinamide + H(+). The enzyme catalyses L-aspartyl-[protein] + NAD(+) = 4-O-(ADP-D-ribosyl)-L-aspartyl-[protein] + nicotinamide. It catalyses the reaction L-glutamyl-[protein] + NAD(+) = 5-O-(ADP-D-ribosyl)-L-glutamyl-[protein] + nicotinamide. The catalysed reaction is L-tyrosyl-[protein] + NAD(+) = O-(ADP-D-ribosyl)-L-tyrosyl-[protein] + nicotinamide + H(+). It carries out the reaction L-histidyl-[protein] + NAD(+) = N(tele)-(ADP-D-ribosyl)-L-histidyl-[protein] + nicotinamide + H(+). ADP-ribosyltransferase activity is regulated via an allosteric activation mechanism. In absence of activation signal, PARP1 is autoinhibited by the PARP alpha-helical domain (also named HD region), which prevents effective NAD(+)-binding. Activity is highly stimulated by signals, such as DNA strand breaks. Binding to damaged DNA unfolds the PARP alpha-helical domain, relieving autoinhibition. Poly-ADP-ribosyltransferase activity is tightly regulated and PARP1 is removed from damaged chromatin following initial poly-ADP-ribosylation of chromatin to avoid prolonged residence (trapping) that has cytotoxic consequences. A number of factors (VCP/p97) or post-translational modifications (auto-poly-ADP-ribosylation or ubiquitination) promote PARP1 removal from chromatin. Poly-ADP-ribosyltransferase that mediates poly-ADP-ribosylation of proteins and plays a key role in DNA repair. Mediates glutamate, aspartate, serine, histidine or tyrosine ADP-ribosylation of proteins: the ADP-D-ribosyl group of NAD(+) is transferred to the acceptor carboxyl group of target residues and further ADP-ribosyl groups are transferred to the 2'-position of the terminal adenosine moiety, building up a polymer with an average chain length of 20-30 units. Serine ADP-ribosylation of proteins constitutes the primary form of ADP-ribosylation of proteins in response to DNA damage. Specificity for the different amino acids is conferred by interacting factors, such as HPF1 and NMNAT1. Following interaction with HPF1, catalyzes serine ADP-ribosylation of target proteins; HPF1 confers serine specificity by completing the PARP1 active site. Also catalyzes tyrosine ADP-ribosylation of target proteins following interaction with HPF1. Following interaction with NMNAT1, catalyzes glutamate and aspartate ADP-ribosylation of target proteins; NMNAT1 confers glutamate and aspartate specificity. PARP1 initiates the repair of DNA breaks: recognizes and binds DNA breaks within chromatin and recruits HPF1, licensing serine ADP-ribosylation of target proteins, such as histones (H2BS6ADPr and H3S10ADPr), thereby promoting decompaction of chromatin and the recruitment of repair factors leading to the reparation of DNA strand breaks. HPF1 initiates serine ADP-ribosylation but restricts the polymerase activity of PARP1 in order to limit the length of poly-ADP-ribose chains. In addition to base excision repair (BER) pathway, also involved in double-strand breaks (DSBs) repair: together with TIMELESS, accumulates at DNA damage sites and promotes homologous recombination repair by mediating poly-ADP-ribosylation. Mediates the poly-ADP-ribosylation of a number of proteins, including itself, APLF, CHFR and NFAT5. In addition to proteins, also able to ADP-ribosylate DNA: catalyzes ADP-ribosylation of DNA strand break termini containing terminal phosphates and a 2'-OH group in single- and double-stranded DNA, respectively. Required for PARP9 and DTX3L recruitment to DNA damage sites. PARP1-dependent PARP9-DTX3L-mediated ubiquitination promotes the rapid and specific recruitment of 53BP1/TP53BP1, UIMC1/RAP80, and BRCA1 to DNA damage sites. PARP1-mediated DNA repair in neurons plays a role in sleep: senses DNA damage in neurons and promotes sleep, facilitating efficient DNA repair. In addition to DNA repair, also involved in other processes, such as transcription regulation, programmed cell death, membrane repair, adipogenesis and innate immunity. Acts as a repressor of transcription: binds to nucleosomes and modulates chromatin structure in a manner similar to histone H1, thereby altering RNA polymerase II. Acts both as a positive and negative regulator of transcription elongation, depending on the context. Acts as a positive regulator of transcription elongation by mediating poly-ADP-ribosylation of NELFE, preventing RNA-binding activity of NELFE and relieving transcription pausing. Acts as a negative regulator of transcription elongation in response to DNA damage by catalyzing poly-ADP-ribosylation of CCNT1, disrupting the phase separation activity of CCNT1 and subsequent activation of CDK9. Involved in replication fork progression following interaction with CARM1: mediates poly-ADP-ribosylation at replication forks, slowing fork progression. Poly-ADP-ribose chains generated by PARP1 also play a role in poly-ADP-ribose-dependent cell death, a process named parthanatos. Also acts as a negative regulator of the cGAS-STING pathway. Acts by mediating poly-ADP-ribosylation of CGAS: PARP1 translocates into the cytosol following phosphorylation by PRKDC and catalyzes poly-ADP-ribosylation and inactivation of CGAS. Acts as a negative regulator of adipogenesis: catalyzes poly-ADP-ribosylation of histone H2B on 'Glu-35' (H2BE35ADPr) following interaction with NMNAT1, inhibiting phosphorylation of H2B at 'Ser-36' (H2BS36ph), thereby blocking expression of pro-adipogenetic genes. Involved in the synthesis of ATP in the nucleus, together with NMNAT1, PARG and NUDT5. Nuclear ATP generation is required for extensive chromatin remodeling events that are energy-consuming. Its function is as follows. Promotes AIFM1-mediated apoptosis. This form, which translocates into the cytoplasm following cleavage by caspase-3 (CASP3) and caspase-7 (CASP7) in response to apoptosis, is auto-poly-ADP-ribosylated and serves as a poly-ADP-ribose carrier to induce AIFM1-mediated apoptosis. Functionally, this cleavage form irreversibly binds to DNA breaks and interferes with DNA repair, promoting DNA damage-induced apoptosis. The polypeptide is Poly [ADP-ribose] polymerase 1 (PARP1) (Bos taurus (Bovine)).